The sequence spans 354 residues: MAPTAAAGLAARDASGHLSPLTISRRSTGDDDVVIKILYCGICHSDLHSIKNEWKNATYPLVPGHEIAGVVTEAGKNVTKFKGGDKVGVGCMVNSCHSCDSCNQGLENHCPGVIFTYNSVDKDGTVTYGGYSSMVVVHERFVVRFPEAMPLDKGAPLLCAGITVYSPMKYHGLNVPSKHVGVLGLGGLGHVAVKFAKAFGMTVTVISSSPGKRQEALERLGADAFVVSKNADEMNAATGTMDGIINTVSANIPIAPLLGLLKPNGKMILVGLPEKPMEIPPFALVASNKTLAGSCIGGMADTEMIDLAAKHGVTAEIEVIGADYVNTAMERLAKADVRYRFVIDIGNTLKDAIE.

Residue Cys43 participates in Zn(2+) binding. NADP(+) is bound at residue Ser45. His65, Glu66, Cys96, Cys99, Cys102, Cys110, and Cys159 together coordinate Zn(2+). NADP(+)-binding positions include Thr163, 184 to 189 (GLGGLG), 207 to 212 (SSSPGK), Thr247, Gly271, and 294 to 296 (SCI).

The protein belongs to the zinc-containing alcohol dehydrogenase family. Homodimer. It depends on Zn(2+) as a cofactor.

It catalyses the reaction (E)-cinnamyl alcohol + NADP(+) = (E)-cinnamaldehyde + NADPH + H(+). It carries out the reaction (E)-coniferol + NADP(+) = (E)-coniferaldehyde + NADPH + H(+). The catalysed reaction is (E)-sinapyl alcohol + NADP(+) = (E)-sinapaldehyde + NADPH + H(+). The enzyme catalyses (E)-4-coumaroyl alcohol + NADP(+) = (E)-4-coumaraldehyde + NADPH + H(+). It catalyses the reaction (E)-caffeyl alcohol + NADP(+) = (E)-caffeyl aldehyde + NADPH + H(+). The protein operates within aromatic compound metabolism; phenylpropanoid biosynthesis. Involved in lignin biosynthesis. Catalyzes the final step specific for the production of lignin monomers. Catalyzes the NADPH-dependent reduction of coniferaldehyde, 5-hydroxyconiferaldehyde, sinapaldehyde, 4-coumaraldehyde and caffeyl aldehyde to their respective alcohols. The protein is Probable cinnamyl alcohol dehydrogenase 5 of Oryza sativa subsp. japonica (Rice).